We begin with the raw amino-acid sequence, 148 residues long: MAALTASCIDLNIQGNGAYSVLKQLATIALQNGFITDSHQFLQTLLLREKMHSTGFGSGVAVPHGKSACVKQPFVLFARKAQAIDWKASDGEDVNCWICLGVPQSGEEDQVKIIGTLCRKIIHKEFIHQLQQGDTDQVLALLNQTLSS.

The PTS EIIA type-2 domain occupies 2–145; that stretch reads AALTASCIDL…DQVLALLNQT (144 aa). The Tele-phosphohistidine intermediate role is filled by His64. Residue His64 is modified to Phosphohistidine; by HPr.

It localises to the cytoplasm. Its function is as follows. The phosphoenolpyruvate-dependent sugar phosphotransferase system (sugar PTS), a major carbohydrate active transport system, catalyzes the phosphorylation of incoming sugar substrates concomitantly with their translocation across the cell membrane. The enzyme II FrvAB PTS system is involved in fructose transport. The sequence is that of PTS system fructose-like EIIA component from Escherichia coli (strain K12).